The primary structure comprises 221 residues: Oxaloacetate tautomerase oaa1, mitochondrial (221 aa).

The Mg(2+) site is built by Glu59, Glu61, and Asp93.

It belongs to the FAH family. The cofactor is Mg(2+). It depends on Mn(2+) as a cofactor.

Its subcellular location is the mitochondrion. The protein localises to the cytoplasm. It carries out the reaction oxaloacetate = enol-oxaloacetate. Tautomerase that converts enol-oxaloacetate, a strong inhibitor of succinate dehydrogenase, to the physiological keto form of oxaloacetate. The chain is Oxaloacetate tautomerase oaa1, mitochondrial from Schizosaccharomyces pombe (strain 972 / ATCC 24843) (Fission yeast).